The primary structure comprises 234 residues: Biosynthetic peptidoglycan transglycosylase (234 aa).

Residues 8–28 (VIGCFAAGVVALNLYFFAAIA) form a helical membrane-spanning segment.

It belongs to the glycosyltransferase 51 family.

It localises to the cell inner membrane. It carries out the reaction [GlcNAc-(1-&gt;4)-Mur2Ac(oyl-L-Ala-gamma-D-Glu-L-Lys-D-Ala-D-Ala)](n)-di-trans,octa-cis-undecaprenyl diphosphate + beta-D-GlcNAc-(1-&gt;4)-Mur2Ac(oyl-L-Ala-gamma-D-Glu-L-Lys-D-Ala-D-Ala)-di-trans,octa-cis-undecaprenyl diphosphate = [GlcNAc-(1-&gt;4)-Mur2Ac(oyl-L-Ala-gamma-D-Glu-L-Lys-D-Ala-D-Ala)](n+1)-di-trans,octa-cis-undecaprenyl diphosphate + di-trans,octa-cis-undecaprenyl diphosphate + H(+). It participates in cell wall biogenesis; peptidoglycan biosynthesis. Functionally, peptidoglycan polymerase that catalyzes glycan chain elongation from lipid-linked precursors. The chain is Biosynthetic peptidoglycan transglycosylase from Ralstonia nicotianae (strain ATCC BAA-1114 / GMI1000) (Ralstonia solanacearum).